We begin with the raw amino-acid sequence, 326 residues long: Beta-ketoacyl-[acyl-carrier-protein] synthase III (326 aa).

Residues cysteine 120 and histidine 253 contribute to the active site. The tract at residues 254 to 258 (QANIR) is ACP-binding. Residue asparagine 283 is part of the active site.

The protein belongs to the thiolase-like superfamily. FabH family. In terms of assembly, homodimer.

The protein localises to the cytoplasm. It carries out the reaction malonyl-[ACP] + acetyl-CoA + H(+) = 3-oxobutanoyl-[ACP] + CO2 + CoA. Its pathway is lipid metabolism; fatty acid biosynthesis. Its function is as follows. Catalyzes the condensation reaction of fatty acid synthesis by the addition to an acyl acceptor of two carbons from malonyl-ACP. Catalyzes the first condensation reaction which initiates fatty acid synthesis and may therefore play a role in governing the total rate of fatty acid production. Possesses both acetoacetyl-ACP synthase and acetyl transacylase activities. Its substrate specificity determines the biosynthesis of branched-chain and/or straight-chain of fatty acids. This is Beta-ketoacyl-[acyl-carrier-protein] synthase III from Ralstonia pickettii (strain 12J).